A 155-amino-acid polypeptide reads, in one-letter code: dCTP deaminase (155 aa).

DCTP contacts are provided by residues 79 to 84 (RSSLAR), aspartate 95, glutamine 124, and tyrosine 138.

It belongs to the dCTP deaminase family. As to quaternary structure, homotrimer.

It catalyses the reaction dCTP + H2O + H(+) = dUTP + NH4(+). It functions in the pathway pyrimidine metabolism; dUMP biosynthesis; dUMP from dCTP (dUTP route): step 1/2. Catalyzes the deamination of dCTP to dUTP. The chain is dCTP deaminase from Thermococcus kodakarensis (strain ATCC BAA-918 / JCM 12380 / KOD1) (Pyrococcus kodakaraensis (strain KOD1)).